We begin with the raw amino-acid sequence, 399 residues long: Glycosyltransferase BC10 (399 aa).

The Cytoplasmic segment spans residues 1–17; it reads MKPPRRWMYGRGGGKGK. The helical; Signal-anchor for type II membrane protein transmembrane segment at 18 to 38 threads the bilayer; that stretch reads PAGLLLLGVFLCLSVVLLLLL. At 39–399 the chain is on the lumenal side; it reads HGSSPSLEGE…LIAANGASTM (361 aa). 2 N-linked (GlcNAc...) asparagine glycosylation sites follow: Asn-142 and Asn-188.

This sequence belongs to the glycosyltransferase 14 family. Expressed in roots, culms, leaves and panicles. Expressed in vascular bundles of leaf sheaths and stems where sclerenchyma cells are developing. Expressed in mechanical tissues of young organs, such as young leaf sheaths, stems and tiller buds.

The protein localises to the membrane. Its function is as follows. Glycosyltransferase required for the regulation of cellulose biosynthesis in the cell wall. Required for the biosynthesis of hexoses (glucose, mannose and galactose) in both cellulosic and non-cellulosic (pectins and hemicelluloses) components of cell walls. Required for the formation of arabinogalactan proteins which contribute to the strengthening of cell walls. Possesses low glycosyltransferase activity. The sequence is that of Glycosyltransferase BC10 from Oryza sativa subsp. japonica (Rice).